Reading from the N-terminus, the 98-residue chain is MPSISTNIILAFITALLGMLIFRSHLMSSLLCLEGMMLSMFILSTLTILNLHFTASFMMPILLLVFAACEAAVGLALLVTVSNTYGLDYIQNLNLLQC.

A run of 3 helical transmembrane segments spans residues 2–22, 29–49, and 61–81; these read PSISTNIILAFITALLGMLIF, SLLCLEGMMLSMFILSTLTIL, and ILLLVFAACEAAVGLALLVTV.

The protein belongs to the complex I subunit 4L family. In terms of assembly, core subunit of respiratory chain NADH dehydrogenase (Complex I) which is composed of 45 different subunits.

Its subcellular location is the mitochondrion inner membrane. The enzyme catalyses a ubiquinone + NADH + 5 H(+)(in) = a ubiquinol + NAD(+) + 4 H(+)(out). Core subunit of the mitochondrial membrane respiratory chain NADH dehydrogenase (Complex I) which catalyzes electron transfer from NADH through the respiratory chain, using ubiquinone as an electron acceptor. Part of the enzyme membrane arm which is embedded in the lipid bilayer and involved in proton translocation. This is NADH-ubiquinone oxidoreductase chain 4L (MT-ND4L) from Eulemur mongoz (Mongoose lemur).